We begin with the raw amino-acid sequence, 354 residues long: Uroporphyrinogen decarboxylase (354 aa).

Substrate-binding positions include 27–31 (RQAGR), phenylalanine 46, aspartate 77, tyrosine 154, threonine 209, and histidine 327.

Belongs to the uroporphyrinogen decarboxylase family. As to quaternary structure, homodimer.

The protein localises to the cytoplasm. It carries out the reaction uroporphyrinogen III + 4 H(+) = coproporphyrinogen III + 4 CO2. It functions in the pathway porphyrin-containing compound metabolism; protoporphyrin-IX biosynthesis; coproporphyrinogen-III from 5-aminolevulinate: step 4/4. In terms of biological role, catalyzes the decarboxylation of four acetate groups of uroporphyrinogen-III to yield coproporphyrinogen-III. The protein is Uroporphyrinogen decarboxylase of Escherichia coli O157:H7.